Here is a 540-residue protein sequence, read N- to C-terminus: Chaperonin GroEL (540 aa).

ATP is bound by residues 29–32, 86–90, G413, 477–479, and D493; these read TIGP, DGTTT, and NAA.

Belongs to the chaperonin (HSP60) family. As to quaternary structure, forms a cylinder of 14 subunits composed of two heptameric rings stacked back-to-back. Interacts with the co-chaperonin GroES.

It is found in the cytoplasm. The enzyme catalyses ATP + H2O + a folded polypeptide = ADP + phosphate + an unfolded polypeptide.. Functionally, together with its co-chaperonin GroES, plays an essential role in assisting protein folding. The GroEL-GroES system forms a nano-cage that allows encapsulation of the non-native substrate proteins and provides a physical environment optimized to promote and accelerate protein folding. This is Chaperonin GroEL from Lactobacillus helveticus (strain DPC 4571).